Here is a 365-residue protein sequence, read N- to C-terminus: Chorismate synthase (365 aa).

NADP(+) is bound at residue arginine 46. FMN is bound by residues 124–126 (RAS), glycine 284, 299–303 (KPTPS), and arginine 326.

It belongs to the chorismate synthase family. FMNH2 is required as a cofactor.

The catalysed reaction is 5-O-(1-carboxyvinyl)-3-phosphoshikimate = chorismate + phosphate. The protein operates within metabolic intermediate biosynthesis; chorismate biosynthesis; chorismate from D-erythrose 4-phosphate and phosphoenolpyruvate: step 7/7. Catalyzes the anti-1,4-elimination of the C-3 phosphate and the C-6 proR hydrogen from 5-enolpyruvylshikimate-3-phosphate (EPSP) to yield chorismate, which is the branch point compound that serves as the starting substrate for the three terminal pathways of aromatic amino acid biosynthesis. This reaction introduces a second double bond into the aromatic ring system. The protein is Chorismate synthase of Pyrobaculum neutrophilum (strain DSM 2338 / JCM 9278 / NBRC 100436 / V24Sta) (Thermoproteus neutrophilus).